The primary structure comprises 141 residues: MAKELTLSIIKPDAVAKSVIGEIYTRFEKAGLDIVAAKMTQLSREQAESFYDIHRARPFFKDLVDFMISGPVMIQVLKGENAVAKNREIMGATNPKEAAPGTIRADFADSIDANAVHGSDSLENAAREIAFFFEPHELCNR.

6 residues coordinate ATP: Lys-11, Phe-59, Arg-87, Thr-93, Arg-104, and Asn-114. The active-site Pros-phosphohistidine intermediate is His-117.

The protein belongs to the NDK family. As to quaternary structure, homotetramer. Mg(2+) is required as a cofactor.

Its subcellular location is the cytoplasm. The enzyme catalyses a 2'-deoxyribonucleoside 5'-diphosphate + ATP = a 2'-deoxyribonucleoside 5'-triphosphate + ADP. The catalysed reaction is a ribonucleoside 5'-diphosphate + ATP = a ribonucleoside 5'-triphosphate + ADP. Functionally, major role in the synthesis of nucleoside triphosphates other than ATP. The ATP gamma phosphate is transferred to the NDP beta phosphate via a ping-pong mechanism, using a phosphorylated active-site intermediate. In Legionella pneumophila (strain Lens), this protein is Nucleoside diphosphate kinase.